Consider the following 1215-residue polypeptide: Chromosome segregation protein sudA (1215 aa).

32-39 provides a ligand contact to ATP; that stretch reads GRNGSGKS. Positions 177–522 form a coiled coil; that stretch reads KIMHETNSKR…LSQMMDHNTS (346 aa). Positions 313-332 are disordered; the sequence is SDNQAAAQESKARHDESLKA. Positions 538 to 650 constitute an SMC hinge domain; that stretch reads EGVYGTLAEL…PNLQVASQYA (113 aa). The interval 654 to 676 is disordered; it reads GVNATTPEGDRSDKRGALTGGFH. Residues 684 to 1091 adopt a coiled-coil conformation; it reads DAVKNLAKWR…EEAKHSVENY (408 aa).

The protein belongs to the SMC family. SMC3 subfamily.

Its subcellular location is the nucleus. In terms of biological role, involved in chromosome segregation in mitosis. The polypeptide is Chromosome segregation protein sudA (sudA) (Emericella nidulans (strain FGSC A4 / ATCC 38163 / CBS 112.46 / NRRL 194 / M139) (Aspergillus nidulans)).